The following is a 494-amino-acid chain: DnaJ homolog subfamily C member 7 (494 aa).

Position 2 is an N-acetylalanine (Ala2). 9 TPR repeats span residues Ala28–Asn61, Ala62–Phe95, Val96–Asn129, Val142–Cys175, Arg177–Asn209, Ala210–His243, Leu256–Asn289, Ala294–Tyr327, and Ile328–Lys361. Positions Asp381–Gln451 constitute a J domain. Ser393 carries the post-translational modification Phosphoserine.

Associates with complexes containing chaperones HSP70 and HSP90. Interacts with the GAP domain of NF1. Interacts with HSP90AA1. Interacts with HSPA1A/B; the interaction is enhanced by ATP. Interacts with HSP90AB1. Interacts with PGR. Interacts with RAD9A; the interaction is interrupted by UV and heat shock treatments. Interacts with HUS1 and RAD1. Interacts with NR1I3. The DNAJC7-NR1I3 complex may also include HSP90. Interacts with HSPA8.

It is found in the cytoplasm. Its subcellular location is the nucleus. It localises to the cytoskeleton. Acts as a co-chaperone regulating the molecular chaperones HSP70 and HSP90 in folding of steroid receptors, such as the glucocorticoid receptor and the progesterone receptor. Proposed to act as a recycling chaperone by facilitating the return of chaperone substrates to early stages of chaperoning if further folding is required. In vitro, induces ATP-independent dissociation of HSP90 but not of HSP70 from the chaperone-substrate complexes. Recruits NR1I3 to the cytoplasm. This Homo sapiens (Human) protein is DnaJ homolog subfamily C member 7 (DNAJC7).